The primary structure comprises 195 residues: Phosphoheptose isomerase (195 aa).

Residues 36-195 (LVDSLKGDGI…IIEKELFGLD (160 aa)) form the SIS domain. Substrate is bound at residue 51–53 (NGG). Histidine 60 and glutamate 64 together coordinate Zn(2+). Substrate is bound by residues glutamate 64, 95–96 (ND), 121–123 (TTS), serine 126, and glutamine 173. 2 residues coordinate Zn(2+): glutamine 173 and histidine 181.

It belongs to the SIS family. GmhA subfamily. The cofactor is Zn(2+).

It is found in the cytoplasm. The enzyme catalyses 2 D-sedoheptulose 7-phosphate = D-glycero-alpha-D-manno-heptose 7-phosphate + D-glycero-beta-D-manno-heptose 7-phosphate. It functions in the pathway carbohydrate biosynthesis; D-glycero-D-manno-heptose 7-phosphate biosynthesis; D-glycero-alpha-D-manno-heptose 7-phosphate and D-glycero-beta-D-manno-heptose 7-phosphate from sedoheptulose 7-phosphate: step 1/1. In terms of biological role, catalyzes the isomerization of sedoheptulose 7-phosphate in D-glycero-D-manno-heptose 7-phosphate. This is Phosphoheptose isomerase from Leptospira biflexa serovar Patoc (strain Patoc 1 / Ames).